A 166-amino-acid polypeptide reads, in one-letter code: MSQYFTLFRIEPAFDIGTENLEQTYRALAARFHPDKFASASAFEQKQAVMMSSTINDAYRTLKNPIDRAAYLLKTSGIDADAPEHTSFAPDFLMQQMEWRETLMEARAGNNLESLKNLDNEIRAEQEKLFCGLKQSFARQDCDTAAQQVRQGRFLDKLRHEISSAL.

Positions Q3–T75 constitute a J domain.

This sequence belongs to the HscB family. In terms of assembly, interacts with HscA and stimulates its ATPase activity.

In terms of biological role, co-chaperone involved in the maturation of iron-sulfur cluster-containing proteins. Seems to help targeting proteins to be folded toward HscA. The polypeptide is Co-chaperone protein HscB homolog (Neisseria gonorrhoeae (strain NCCP11945)).